We begin with the raw amino-acid sequence, 286 residues long: Aspartate/glutamate leucyltransferase (286 aa).

Belongs to the R-transferase family. Bpt subfamily.

It is found in the cytoplasm. The enzyme catalyses N-terminal L-glutamyl-[protein] + L-leucyl-tRNA(Leu) = N-terminal L-leucyl-L-glutamyl-[protein] + tRNA(Leu) + H(+). It carries out the reaction N-terminal L-aspartyl-[protein] + L-leucyl-tRNA(Leu) = N-terminal L-leucyl-L-aspartyl-[protein] + tRNA(Leu) + H(+). Functionally, functions in the N-end rule pathway of protein degradation where it conjugates Leu from its aminoacyl-tRNA to the N-termini of proteins containing an N-terminal aspartate or glutamate. The polypeptide is Aspartate/glutamate leucyltransferase (Jannaschia sp. (strain CCS1)).